The sequence spans 158 residues: Probable inactive acireductone dioxygenase 2 (158 aa).

Belongs to the acireductone dioxygenase (ARD) family.

The protein resides in the cytoplasm. It localises to the nucleus. In terms of biological role, probable inactive acireductone dioxygenase. The polypeptide is Probable inactive acireductone dioxygenase 2 (Caenorhabditis elegans).